We begin with the raw amino-acid sequence, 273 residues long: Putative phosphoenolpyruvate synthase regulatory protein (273 aa).

Residue 153–160 (AVSRAGKT) participates in ADP binding.

The protein belongs to the pyruvate, phosphate/water dikinase regulatory protein family. PSRP subfamily.

The enzyme catalyses [pyruvate, water dikinase] + ADP = [pyruvate, water dikinase]-phosphate + AMP + H(+). It catalyses the reaction [pyruvate, water dikinase]-phosphate + phosphate + H(+) = [pyruvate, water dikinase] + diphosphate. In terms of biological role, bifunctional serine/threonine kinase and phosphorylase involved in the regulation of the phosphoenolpyruvate synthase (PEPS) by catalyzing its phosphorylation/dephosphorylation. The protein is Putative phosphoenolpyruvate synthase regulatory protein of Xylella fastidiosa (strain 9a5c).